Consider the following 505-residue polypeptide: Lysine--tRNA ligase (505 aa).

Residues E415 and E422 each contribute to the Mg(2+) site.

The protein belongs to the class-II aminoacyl-tRNA synthetase family. Homodimer. Mg(2+) is required as a cofactor.

It localises to the cytoplasm. It catalyses the reaction tRNA(Lys) + L-lysine + ATP = L-lysyl-tRNA(Lys) + AMP + diphosphate. The sequence is that of Lysine--tRNA ligase from Xanthomonas axonopodis pv. citri (strain 306).